Here is a 399-residue protein sequence, read N- to C-terminus: 4-hydroxy-3-methylbut-2-enyl diphosphate reductase (399 aa).

Cys-66 serves as a coordination point for [4Fe-4S] cluster. A (2E)-4-hydroxy-3-methylbut-2-enyl diphosphate-binding site is contributed by His-96. Residue His-96 coordinates dimethylallyl diphosphate. Residue His-96 participates in isopentenyl diphosphate binding. Residue Cys-157 participates in [4Fe-4S] cluster binding. His-185 lines the (2E)-4-hydroxy-3-methylbut-2-enyl diphosphate pocket. Dimethylallyl diphosphate is bound at residue His-185. His-185 serves as a coordination point for isopentenyl diphosphate. Residue Glu-187 is the Proton donor of the active site. Thr-250 is a binding site for (2E)-4-hydroxy-3-methylbut-2-enyl diphosphate. Residue Cys-288 coordinates [4Fe-4S] cluster. The (2E)-4-hydroxy-3-methylbut-2-enyl diphosphate site is built by Ser-317, Ser-318, Asn-319, and Ser-379. The dimethylallyl diphosphate site is built by Ser-317, Ser-318, Asn-319, and Ser-379. Isopentenyl diphosphate-binding residues include Ser-317, Ser-318, Asn-319, and Ser-379.

Belongs to the IspH family. Requires [4Fe-4S] cluster as cofactor.

It catalyses the reaction isopentenyl diphosphate + 2 oxidized [2Fe-2S]-[ferredoxin] + H2O = (2E)-4-hydroxy-3-methylbut-2-enyl diphosphate + 2 reduced [2Fe-2S]-[ferredoxin] + 2 H(+). The enzyme catalyses dimethylallyl diphosphate + 2 oxidized [2Fe-2S]-[ferredoxin] + H2O = (2E)-4-hydroxy-3-methylbut-2-enyl diphosphate + 2 reduced [2Fe-2S]-[ferredoxin] + 2 H(+). The protein operates within isoprenoid biosynthesis; dimethylallyl diphosphate biosynthesis; dimethylallyl diphosphate from (2E)-4-hydroxy-3-methylbutenyl diphosphate: step 1/1. It functions in the pathway isoprenoid biosynthesis; isopentenyl diphosphate biosynthesis via DXP pathway; isopentenyl diphosphate from 1-deoxy-D-xylulose 5-phosphate: step 6/6. Functionally, catalyzes the conversion of 1-hydroxy-2-methyl-2-(E)-butenyl 4-diphosphate (HMBPP) into a mixture of isopentenyl diphosphate (IPP) and dimethylallyl diphosphate (DMAPP). Acts in the terminal step of the DOXP/MEP pathway for isoprenoid precursor biosynthesis. This Synechococcus sp. (strain WH7803) protein is 4-hydroxy-3-methylbut-2-enyl diphosphate reductase.